We begin with the raw amino-acid sequence, 866 residues long: MMSSGHKGPNVRNFFKWQRGESSSSLTTGLLHNESHEIELSNYGGIPSPGSESPSGLLNGESLNVQPIADLDLFVERLYSYYRDKGLWCIIVKWAVELLSLGFIICFSGFFLLYVDWNGLQNAKCGMDAVESGTKPCDLVKEAIHPHPLSPFTLTTAIIVGYLALFSVYWLFCFLRFFAQLKDTLDFRHFYYNNLHVTDNEILTMPWATVLEKVVQLQSSQCLCVVKDLSAHDMVMRLMRKENYLIGMLNKGLLSFPISHWIPGAGPAVKSAPDGTQYHLVLTKTLEWTLNWCILQSMFDCNFRVRRDFVSNPTTLKKRLFVVGLAMLLLSPFLVIFMLVYLFLRHAEQFYNHPSTASSRRWSNLSKWLFREFNEVDHLFKHRINSSVVHASEYLKQFPSPIISIIAKFVSFVSGGFAAVLIIIAFLEESLLEGHIFGRNLFWYAAVFGTITAISRAAISDELLVLDPVGTMSLVVQNTHYMPKRWRGKENKDDVRLELETLFQYTGMMLLEEIASIFITPFLLMFVVPKRVDDILQFIKDFTVDIEGVGHVCSFSAFYFENHGNIKYGSPHNATRREQRSSQGKMEKSFLSFQSSYPSWESDSLGKQFLSNLRTFRDRKLHEINTRHSSPSRAWRESTNTPALYRDIPRNPLASGNHTDSMWLIDPDQRNHPYLLDWYYTSQAHNRTDHPIERANEILTANQNATDCWPPDLGIRGEDSRDLLNMEASTSGQFFRESILRHDQPEGEDSYGSQHPLDGRNQWWGRGNHSQISTAHPATTNSFIEPPDFINRYTAGNLLDNSWSRRSIEEEDEEEEELDWEENARRNLSRTTFMDDNDIEAGIDLHFDDVYSSRPQETSTSSTTLR.

Over 1–94 (MMSSGHKGPN…KGLWCIIVKW (94 aa)) the chain is Cytoplasmic. A helical transmembrane segment spans residues 95 to 115 (AVELLSLGFIICFSGFFLLYV). Residues 116–153 (DWNGLQNAKCGMDAVESGTKPCDLVKEAIHPHPLSPFT) lie on the Lumenal side of the membrane. Residues 154 to 174 (LTTAIIVGYLALFSVYWLFCF) traverse the membrane as a helical segment. Residues 175-319 (LRFFAQLKDT…VSNPTTLKKR (145 aa)) are Cytoplasmic-facing. The stretch at 320–340 (LFVVGLAMLLLSPFLVIFMLV) is an intramembrane region. Residues 341-404 (YLFLRHAEQF…LKQFPSPIIS (64 aa)) lie on the Cytoplasmic side of the membrane. The helical transmembrane segment at 405-425 (IIAKFVSFVSGGFAAVLIIIA) threads the bilayer. The Lumenal portion of the chain corresponds to 426–433 (FLEESLLE). The helical transmembrane segment at 434-454 (GHIFGRNLFWYAAVFGTITAI) threads the bilayer. Over 455–507 (SRAAISDELLVLDPVGTMSLVVQNTHYMPKRWRGKENKDDVRLELETLFQYTG) the chain is Cytoplasmic. An intramembrane segment occupies 508 to 528 (MMLLEEIASIFITPFLLMFVV). The Cytoplasmic segment spans residues 529-866 (PKRVDDILQF…ETSTSSTTLR (338 aa)). A disordered region spans residues 744–781 (QPEGEDSYGSQHPLDGRNQWWGRGNHSQISTAHPATTN). The span at 768 to 781 (NHSQISTAHPATTN) shows a compositional bias: polar residues.

This sequence belongs to the ATG9 family. In terms of assembly, homotrimer; forms a homotrimer with a central pore that forms a path between the two membrane leaflets. In terms of tissue distribution, expressed in roots, leaves, stems and flowers.

Its subcellular location is the preautophagosomal structure membrane. In terms of biological role, phospholipid scramblase involved in autophagy by mediating autophagosomal membrane expansion. Cycles between the preautophagosomal structure/phagophore assembly site (PAS) and the cytoplasmic vesicle pool and supplies membrane for the growing autophagosome. Lipid scramblase activity plays a key role in preautophagosomal structure/phagophore assembly by distributing the phospholipids that arrive through ATG2 from the cytoplasmic to the luminal leaflet of the bilayer, thereby driving autophagosomal membrane expansion. In addition to autophagy, also plays a role in necrotic cell death. Plays an essential role in plant nutrient recycling. This is Autophagy-related protein 9 from Arabidopsis thaliana (Mouse-ear cress).